An 88-amino-acid polypeptide reads, in one-letter code: Phosphocarrier protein HPr (88 aa).

The 88-residue stretch at 1–88 (MASKEFHIVV…ETMTKEGLAE (88 aa)) folds into the HPr domain. Histidine 15 serves as the catalytic Pros-phosphohistidine intermediate. Serine 46 bears the Phosphoserine; by HPrK/P mark.

It belongs to the HPr family.

The protein resides in the cytoplasm. Its activity is regulated as follows. Phosphorylation on Ser-46 inhibits the phosphoryl transfer from enzyme I to HPr. Its function is as follows. General (non sugar-specific) component of the phosphoenolpyruvate-dependent sugar phosphotransferase system (sugar PTS). This major carbohydrate active-transport system catalyzes the phosphorylation of incoming sugar substrates concomitantly with their translocation across the cell membrane. The phosphoryl group from phosphoenolpyruvate (PEP) is transferred to the phosphoryl carrier protein HPr by enzyme I. Phospho-HPr then transfers it to the PTS EIIA domain. In terms of biological role, P-Ser-HPr interacts with the catabolite control protein A (CcpA), forming a complex that binds to DNA at the catabolite response elements cre, operator sites preceding a large number of catabolite-regulated genes. Thus, P-Ser-HPr is a corepressor in carbon catabolite repression (CCR), a mechanism that allows bacteria to coordinate and optimize the utilization of available carbon sources. P-Ser-HPr also plays a role in inducer exclusion, in which it probably interacts with several non-PTS permeases and inhibits their transport activity. This Lactococcus lactis subsp. lactis (strain IL1403) (Streptococcus lactis) protein is Phosphocarrier protein HPr (ptsH).